Reading from the N-terminus, the 157-residue chain is Protein Smg homolog (157 aa).

Belongs to the Smg family.

In Stenotrophomonas maltophilia (strain R551-3), this protein is Protein Smg homolog.